Reading from the N-terminus, the 942-residue chain is Probable serine/threonine-protein kinase DDB_G0279719 (942 aa).

Residues 4–617 (YEVVKLIGVG…IDLILQNKLF (614 aa)) enclose the Protein kinase domain. Residues 10-18 (IGVGGEAKA) and lysine 33 contribute to the ATP site. Disordered stretches follow at residues 109–170 (NNNQ…INNN), 247–303 (SFSN…NGNT), 352–371 (QPPQ…GADV), and 408–445 (NDPS…LNIN). Over residues 258-272 (NSNDSNLHQSSSNSS) the composition is skewed to low complexity. Over residues 288–303 (SPGTSTPYQKGSNGNT) the composition is skewed to polar residues. 2 stretches are compositionally biased toward low complexity: residues 353–367 (PPQS…SSPT) and 410–432 (PSSH…PQSP). Aspartate 487 (proton acceptor) is an active-site residue. The segment at 642-686 (TNSKSNSSNNLNNSNSNNDIINNNNNNNSSNNINNNNIVNLNNSY) is disordered. Residues 675–703 (NNNNIVNLNNSYNNKQDKCEQRNKSLNQN) adopt a coiled-coil conformation.

This sequence belongs to the protein kinase superfamily. Ser/Thr protein kinase family.

It catalyses the reaction L-seryl-[protein] + ATP = O-phospho-L-seryl-[protein] + ADP + H(+). It carries out the reaction L-threonyl-[protein] + ATP = O-phospho-L-threonyl-[protein] + ADP + H(+). This chain is Probable serine/threonine-protein kinase DDB_G0279719, found in Dictyostelium discoideum (Social amoeba).